The sequence spans 547 residues: Chaperonin GroEL (547 aa).

Residues Thr30–Pro33, Lys51, Asp87–Thr91, Gly415, and Asp496 contribute to the ATP site.

It belongs to the chaperonin (HSP60) family. In terms of assembly, forms a cylinder of 14 subunits composed of two heptameric rings stacked back-to-back. Interacts with the co-chaperonin GroES.

The protein resides in the cytoplasm. The catalysed reaction is ATP + H2O + a folded polypeptide = ADP + phosphate + an unfolded polypeptide.. Its function is as follows. Together with its co-chaperonin GroES, plays an essential role in assisting protein folding. The GroEL-GroES system forms a nano-cage that allows encapsulation of the non-native substrate proteins and provides a physical environment optimized to promote and accelerate protein folding. This Actinobacillus pleuropneumoniae serotype 7 (strain AP76) protein is Chaperonin GroEL.